A 324-amino-acid polypeptide reads, in one-letter code: NAD kinase (324 aa).

Aspartate 89 serves as the catalytic Proton acceptor. NAD(+)-binding positions include 89–90 (DG), arginine 94, 163–164 (NE), aspartate 193, and 204–209 (TAYAFS).

Belongs to the NAD kinase family. It depends on a divalent metal cation as a cofactor.

The protein resides in the cytoplasm. The catalysed reaction is NAD(+) + ATP = ADP + NADP(+) + H(+). Functionally, involved in the regulation of the intracellular balance of NAD and NADP, and is a key enzyme in the biosynthesis of NADP. Catalyzes specifically the phosphorylation on 2'-hydroxyl of the adenosine moiety of NAD to yield NADP. This chain is NAD kinase, found in Nocardia farcinica (strain IFM 10152).